The sequence spans 218 residues: Large ribosomal subunit protein bL25 (218 aa).

Positions Pro197–Glu218 are disordered. Residues Ser201–Glu218 are compositionally biased toward basic and acidic residues.

This sequence belongs to the bacterial ribosomal protein bL25 family. CTC subfamily. Part of the 50S ribosomal subunit; part of the 5S rRNA/L5/L18/L25 subcomplex. Contacts the 5S rRNA. Binds to the 5S rRNA independently of L5 and L18.

Functionally, this is one of the proteins that binds to the 5S RNA in the ribosome where it forms part of the central protuberance. The chain is Large ribosomal subunit protein bL25 from Dehalococcoides mccartyi (strain ATCC BAA-2100 / JCM 16839 / KCTC 5957 / BAV1).